A 361-amino-acid polypeptide reads, in one-letter code: Phosphoserine aminotransferase (361 aa).

Residue R42 coordinates L-glutamate. Residues 76-77, W102, T152, D172, and Q195 contribute to the pyridoxal 5'-phosphate site; that span reads AT. An N6-(pyridoxal phosphate)lysine modification is found at K196. 237–238 is a pyridoxal 5'-phosphate binding site; the sequence is NT.

It belongs to the class-V pyridoxal-phosphate-dependent aminotransferase family. SerC subfamily. In terms of assembly, homodimer. Pyridoxal 5'-phosphate is required as a cofactor.

The protein resides in the cytoplasm. The enzyme catalyses O-phospho-L-serine + 2-oxoglutarate = 3-phosphooxypyruvate + L-glutamate. It carries out the reaction 4-(phosphooxy)-L-threonine + 2-oxoglutarate = (R)-3-hydroxy-2-oxo-4-phosphooxybutanoate + L-glutamate. Its pathway is amino-acid biosynthesis; L-serine biosynthesis; L-serine from 3-phospho-D-glycerate: step 2/3. The protein operates within cofactor biosynthesis; pyridoxine 5'-phosphate biosynthesis; pyridoxine 5'-phosphate from D-erythrose 4-phosphate: step 3/5. Catalyzes the reversible conversion of 3-phosphohydroxypyruvate to phosphoserine and of 3-hydroxy-2-oxo-4-phosphonooxybutanoate to phosphohydroxythreonine. The polypeptide is Phosphoserine aminotransferase (Stenotrophomonas maltophilia (strain K279a)).